The chain runs to 252 residues: Chitooligosaccharide deacetylase (252 aa).

Mg(2+) contacts are provided by His-61 and His-125.

Belongs to the YdjC deacetylase family. ChbG subfamily. Homodimer. It depends on Mg(2+) as a cofactor.

The protein localises to the cytoplasm. The enzyme catalyses N,N'-diacetylchitobiose + H2O = N-acetyl-beta-D-glucosaminyl-(1-&gt;4)-D-glucosamine + acetate. It carries out the reaction diacetylchitobiose-6'-phosphate + H2O = N'-monoacetylchitobiose-6'-phosphate + acetate. It functions in the pathway glycan degradation; chitin degradation. Involved in the degradation of chitin. ChbG is essential for growth on the acetylated chitooligosaccharides chitobiose and chitotriose but is dispensable for growth on cellobiose and chitosan dimer, the deacetylated form of chitobiose. Deacetylation of chitobiose-6-P and chitotriose-6-P is necessary for both the activation of the chb promoter by the regulatory protein ChbR and the hydrolysis of phosphorylated beta-glucosides by the phospho-beta-glucosidase ChbF. Catalyzes the removal of only one acetyl group from chitobiose-6-P to yield monoacetylchitobiose-6-P, the inducer of ChbR and the substrate of ChbF. This Salmonella enteritidis PT4 (strain P125109) protein is Chitooligosaccharide deacetylase.